The following is a 329-amino-acid chain: Alpha/beta hydrolase domain-containing protein 17C (329 aa).

A compositionally biased stretch (low complexity) spans 53 to 79; sequence GASAPAPAQATAAAAAAQPAPQQPEEG. The segment at 53-85 is disordered; that stretch reads GASAPAPAQATAAAAAAQPAPQQPEEGAGAGPG. Residues serine 211, aspartate 276, and histidine 305 each act as charge relay system in the active site.

This sequence belongs to the AB hydrolase superfamily. ABHD17 family. Post-translationally, palmitoylated on cysteine residues located in a cysteine cluster at the N-terminus which promotes membrane localization. Palmitoylation is required for post-synaptic localization and for depalmitoylating activity towards DLG4/PSD95.

It is found in the recycling endosome membrane. It localises to the cell projection. The protein resides in the dendritic spine. The protein localises to the postsynaptic density membrane. The enzyme catalyses S-hexadecanoyl-L-cysteinyl-[protein] + H2O = L-cysteinyl-[protein] + hexadecanoate + H(+). Its activity is regulated as follows. Inhibited by palmostatin-B. Functionally, hydrolyzes fatty acids from S-acylated cysteine residues in proteins. Has depalmitoylating activity towards NRAS and DLG4/PSD95. The sequence is that of Alpha/beta hydrolase domain-containing protein 17C from Homo sapiens (Human).